Reading from the N-terminus, the 703-residue chain is MAVDITTDLNKVRNIGIMAHIDAGKTTTTERILFYTGITYKIGEVHEGAATMDWMEQEQERGITITSAATTCWWKDHQINIIDTPGHVDFTAEVERSLRVLDGAVAVFDGVAGVEPQTMTVWRQANKYAVPRMCFVNKLDRTGADFFRCVDMMVERLNSTPLVLQLPIGAESDFLGVVDLVGMRALTWRGETKMGEDYEVEEIPAELAEQAAEYREKLLETLSEADDDVMEKYLEGEDFTVEELEAAIRRATLADKVNPVLCGTAFKNKGVQPLLDAVVKFLPSPLDIGEIIGHSVKDENEKVSRKPADSEPFSGLAYKIASDPHLGKLIYIRVYSGKLEAGSTVVNSVNGRKERIGKVYQMHANKREEIASVGAGQIVAVMGLKDTKTGHTLSDPQHQVVLESMTFPAPVIEVAIEPKTKSDQEKLGTAIQRLSDEDPTFTVKSDEETGQTIIAGMGELHLEILVDRMRREFRVEATVGKPQVAYRETIRRKVENHSYTHKKQTGGSGQFAKVIISLEPSIDPETNTGAGYEFVNNVSGGRVPREYIPSVDQGAQEAMEFGVLAGYPMVDVKVTLEDGAYHDVDSSELAFKIAGNQAFKEAARQAKPVLLEPMFAVEVTTPETFLGTVIGDINSRRGHIQAQEERHGDMVISALVPLSEMFGYVGDLRSKTSGQASYSMEFDSYAEVPQGIADEIIKKVRGE.

Residues 10–286 enclose the tr-type G domain; the sequence is NKVRNIGIMA…AVVKFLPSPL (277 aa). GTP contacts are provided by residues 19–26, 83–87, and 137–140; these read AHIDAGKT, DTPGH, and NKLD.

Belongs to the TRAFAC class translation factor GTPase superfamily. Classic translation factor GTPase family. EF-G/EF-2 subfamily.

It localises to the cytoplasm. Catalyzes the GTP-dependent ribosomal translocation step during translation elongation. During this step, the ribosome changes from the pre-translocational (PRE) to the post-translocational (POST) state as the newly formed A-site-bound peptidyl-tRNA and P-site-bound deacylated tRNA move to the P and E sites, respectively. Catalyzes the coordinated movement of the two tRNA molecules, the mRNA and conformational changes in the ribosome. This chain is Elongation factor G, found in Nocardioides sp. (strain ATCC BAA-499 / JS614).